A 169-amino-acid chain; its full sequence is Thiol peroxidase (169 aa).

The 149-residue stretch at 19–167 folds into the Thioredoxin domain; that stretch reads LKVGDRAPEA…YDEVVNKVKE (149 aa). Residue C61 is the Cysteine sulfenic acid (-SOH) intermediate of the active site. C61 and C95 form a disulfide bridge.

This sequence belongs to the peroxiredoxin family. Tpx subfamily. Homodimer.

It catalyses the reaction a hydroperoxide + [thioredoxin]-dithiol = an alcohol + [thioredoxin]-disulfide + H2O. Functionally, thiol-specific peroxidase that catalyzes the reduction of hydrogen peroxide and organic hydroperoxides to water and alcohols, respectively. Plays a role in cell protection against oxidative stress by detoxifying peroxides. The chain is Thiol peroxidase from Aquifex aeolicus (strain VF5).